The following is a 423-amino-acid chain: Probable sucrose-phosphatase 1 (423 aa).

The protein belongs to the sucrose phosphatase family. As to quaternary structure, homodimer. Mg(2+) is required as a cofactor.

The enzyme catalyses sucrose 6(F)-phosphate + H2O = sucrose + phosphate. It functions in the pathway glycan biosynthesis; sucrose biosynthesis; sucrose from D-fructose 6-phosphate and UDP-alpha-D-glucose: step 2/2. Catalyzes the final step of sucrose synthesis. The polypeptide is Probable sucrose-phosphatase 1 (SPP1) (Arabidopsis thaliana (Mouse-ear cress)).